We begin with the raw amino-acid sequence, 591 residues long: Isocitrate dehydrogenase kinase/phosphatase (591 aa).

ATP is bound by residues 315–321 and Lys336; that span reads APGVKGM. The active site involves Asp371.

The protein belongs to the AceK family.

The protein resides in the cytoplasm. The catalysed reaction is L-seryl-[isocitrate dehydrogenase] + ATP = O-phospho-L-seryl-[isocitrate dehydrogenase] + ADP + H(+). Bifunctional enzyme which can phosphorylate or dephosphorylate isocitrate dehydrogenase (IDH) on a specific serine residue. This is a regulatory mechanism which enables bacteria to bypass the Krebs cycle via the glyoxylate shunt in response to the source of carbon. When bacteria are grown on glucose, IDH is fully active and unphosphorylated, but when grown on acetate or ethanol, the activity of IDH declines drastically concomitant with its phosphorylation. The sequence is that of Isocitrate dehydrogenase kinase/phosphatase from Pectobacterium atrosepticum (strain SCRI 1043 / ATCC BAA-672) (Erwinia carotovora subsp. atroseptica).